Consider the following 696-residue polypeptide: DNA-directed RNA polymerase subunit beta' (696 aa).

Residues Cys-69, Cys-71, Cys-87, and Cys-90 each contribute to the Zn(2+) site. Mg(2+) is bound by residues Asp-504, Asp-506, and Asp-508.

This sequence belongs to the RNA polymerase beta' chain family. RpoC1 subfamily. As to quaternary structure, in plastids the minimal PEP RNA polymerase catalytic core is composed of four subunits: alpha, beta, beta', and beta''. When a (nuclear-encoded) sigma factor is associated with the core the holoenzyme is formed, which can initiate transcription. Mg(2+) is required as a cofactor. The cofactor is Zn(2+).

It localises to the plastid. Its subcellular location is the chloroplast. It catalyses the reaction RNA(n) + a ribonucleoside 5'-triphosphate = RNA(n+1) + diphosphate. Functionally, DNA-dependent RNA polymerase catalyzes the transcription of DNA into RNA using the four ribonucleoside triphosphates as substrates. The polypeptide is DNA-directed RNA polymerase subunit beta' (Pinus thunbergii (Japanese black pine)).